Reading from the N-terminus, the 310-residue chain is Probable cobalamin biosynthesis protein CobD (310 aa).

5 helical membrane-spanning segments follow: residues 53 to 73, 80 to 100, 157 to 177, 215 to 235, and 289 to 309; these read LVFG…IFFT, LISN…FSIG, DSII…AFIY, IAGI…VPAI, and AVDY…FNLI.

It belongs to the CobD/CbiB family.

Its subcellular location is the cell membrane. The protein operates within cofactor biosynthesis; adenosylcobalamin biosynthesis. Its function is as follows. Converts cobyric acid to cobinamide by the addition of aminopropanol on the F carboxylic group. The polypeptide is Probable cobalamin biosynthesis protein CobD (Methanococcus vannielii (strain ATCC 35089 / DSM 1224 / JCM 13029 / OCM 148 / SB)).